The chain runs to 234 residues: GTP:AMP phosphotransferase, mitochondrial (234 aa).

Residue 24–29 coordinates GTP; sequence GSGKGT. The interval 45–74 is NMP; it reads SSGDILRQEIKSESTLGREATTYIAQGKLL. Residues S46, R51, 72–74, 103–106, and Q110 each bind AMP; these read KLL and GFPR. Residues 144 to 181 form an LID region; that stretch reads NRYVHVPSGRVYNLQYNPPKVPGLDDITGEPLTKRLDD. Residues R145 and 154–155 contribute to the GTP site; that span reads VY. R178 and R189 together coordinate AMP. S218 contributes to the GTP binding site.

This sequence belongs to the adenylate kinase family. AK3 subfamily. As to quaternary structure, monomer.

It localises to the mitochondrion matrix. The catalysed reaction is a ribonucleoside 5'-triphosphate + AMP = a ribonucleoside 5'-diphosphate + ADP. In terms of biological role, involved in maintaining the homeostasis of cellular nucleotides by catalyzing the interconversion of nucleoside phosphates. Has GTP:AMP phosphotransferase and ITP:AMP phosphotransferase activities. Does not accept ATP as phosphate donor. The sequence is that of GTP:AMP phosphotransferase, mitochondrial from Saccharomyces cerevisiae (Baker's yeast).